The following is a 269-amino-acid chain: Type II methyltransferase M2.LlaDCHI (269 aa).

Belongs to the N(4)/N(6)-methyltransferase family.

It carries out the reaction a 2'-deoxyadenosine in DNA + S-adenosyl-L-methionine = an N(6)-methyl-2'-deoxyadenosine in DNA + S-adenosyl-L-homocysteine + H(+). Its function is as follows. A beta subtype methylase, recognizes the double-stranded sequence 5'-GATC-3', methylates A-2 on both strands, and protects the DNA from cleavage by the LlaDCHI endonuclease. The sequence is that of Type II methyltransferase M2.LlaDCHI from Lactococcus lactis subsp. cremoris (Streptococcus cremoris).